The following is a 450-amino-acid chain: ATP-dependent protease ATPase subunit HslU (450 aa).

ATP is bound by residues valine 29, 71-76, aspartate 261, glutamate 328, and arginine 400; that span reads GVGKTE.

The protein belongs to the ClpX chaperone family. HslU subfamily. As to quaternary structure, a double ring-shaped homohexamer of HslV is capped on each side by a ring-shaped HslU homohexamer. The assembly of the HslU/HslV complex is dependent on binding of ATP.

It localises to the cytoplasm. In terms of biological role, ATPase subunit of a proteasome-like degradation complex; this subunit has chaperone activity. The binding of ATP and its subsequent hydrolysis by HslU are essential for unfolding of protein substrates subsequently hydrolyzed by HslV. HslU recognizes the N-terminal part of its protein substrates and unfolds these before they are guided to HslV for hydrolysis. This Rickettsia akari (strain Hartford) protein is ATP-dependent protease ATPase subunit HslU.